Here is a 204-residue protein sequence, read N- to C-terminus: MRLDPFYLIVDSADWVERLVPLGVKLVQLRIKDRPEPVLREEIRRAKAACAAAACQLIINDYWRLAIDEGCDFIHLGQEDLMAADLAAIRRAGLKLGLSTHDPSELETALAAAPDYVALGPVWPTILKEMKWAPQGVERLADWRRRVGPMPLVAIGGITAERAPLVLENGADSAAVVTDITRNPDPEARTRQWLAATAPWRSVG.

Residues 28–32 (QLRIK) and N60 each bind 4-amino-2-methyl-5-(diphosphooxymethyl)pyrimidine. The Mg(2+) site is built by D61 and D80. 4-amino-2-methyl-5-(diphosphooxymethyl)pyrimidine is bound by residues S99 and K128. 2-[(2R,5Z)-2-carboxy-4-methylthiazol-5(2H)-ylidene]ethyl phosphate-binding positions include G157 and 177 to 178 (VT).

It belongs to the thiamine-phosphate synthase family. Requires Mg(2+) as cofactor.

It carries out the reaction 2-[(2R,5Z)-2-carboxy-4-methylthiazol-5(2H)-ylidene]ethyl phosphate + 4-amino-2-methyl-5-(diphosphooxymethyl)pyrimidine + 2 H(+) = thiamine phosphate + CO2 + diphosphate. The catalysed reaction is 2-(2-carboxy-4-methylthiazol-5-yl)ethyl phosphate + 4-amino-2-methyl-5-(diphosphooxymethyl)pyrimidine + 2 H(+) = thiamine phosphate + CO2 + diphosphate. It catalyses the reaction 4-methyl-5-(2-phosphooxyethyl)-thiazole + 4-amino-2-methyl-5-(diphosphooxymethyl)pyrimidine + H(+) = thiamine phosphate + diphosphate. The protein operates within cofactor biosynthesis; thiamine diphosphate biosynthesis; thiamine phosphate from 4-amino-2-methyl-5-diphosphomethylpyrimidine and 4-methyl-5-(2-phosphoethyl)-thiazole: step 1/1. In terms of biological role, condenses 4-methyl-5-(beta-hydroxyethyl)thiazole monophosphate (THZ-P) and 2-methyl-4-amino-5-hydroxymethyl pyrimidine pyrophosphate (HMP-PP) to form thiamine monophosphate (TMP). The chain is Thiamine-phosphate synthase from Rhizobium etli (strain ATCC 51251 / DSM 11541 / JCM 21823 / NBRC 15573 / CFN 42).